The sequence spans 230 residues: MASTMTPYFGIVVSLIAYGIGTLLFKHSKGFFLFTPLFVAMVLGIVFLKVGNFTFEEYNTGGKMISFFLEPATIAFAIPLYKQVDKLKKYWWQILSAIVVGSICSVIVVFIVAKAIGLDTAVMNSMLPQAATTAIALPISESIGGIPAITSFAVIFNAVIVYALGALFLKTFRVKHPIAKGLALGTAGHALGVAVGIEMGEVEAAMASIAVTVVGVVTVVVIPMFMPFIG.

The next 7 membrane-spanning stretches (helical) occupy residues 5-25 (MTPYFGIVVSLIAYGIGTLLF), 30-50 (GFFLFTPLFVAMVLGIVFLKV), 61-81 (GGKMISFFLEPATIAFAIPLY), 92-112 (WQILSAIVVGSICSVIVVFIV), 149-169 (ITSFAVIFNAVIVYALGALFL), 177-197 (PIAKGLALGTAGHALGVAVGI), and 209-229 (IAVTVVGVVTVVVIPMFMPFI).

Belongs to the CidB/LrgB family. LrgB subfamily.

The protein localises to the cell membrane. Its function is as follows. Inhibits the expression or activity of extracellular murein hydrolases by interacting, possibly with LrgA, with the holin-like protein CidA. The LrgAB and CidA proteins may affect the proton motive force of the membrane. May be involved in programmed cell death (PCD), possibly triggering PCD in response to antibiotics and environmental stresses. The polypeptide is Antiholin-like protein LrgB (Bacillus cereus (strain Q1)).